The sequence spans 155 residues: Ribosome maturation factor RimP (155 aa).

Belongs to the RimP family.

The protein resides in the cytoplasm. Required for maturation of 30S ribosomal subunits. This is Ribosome maturation factor RimP from Desulforapulum autotrophicum (strain ATCC 43914 / DSM 3382 / VKM B-1955 / HRM2) (Desulfobacterium autotrophicum).